Consider the following 348-residue polypeptide: Ribosomal RNA small subunit methyltransferase C (348 aa).

It belongs to the methyltransferase superfamily. RsmC family. In terms of assembly, monomer.

Its subcellular location is the cytoplasm. It carries out the reaction guanosine(1207) in 16S rRNA + S-adenosyl-L-methionine = N(2)-methylguanosine(1207) in 16S rRNA + S-adenosyl-L-homocysteine + H(+). In terms of biological role, specifically methylates the guanine in position 1207 of 16S rRNA in the 30S particle. This is Ribosomal RNA small subunit methyltransferase C from Pectobacterium atrosepticum (strain SCRI 1043 / ATCC BAA-672) (Erwinia carotovora subsp. atroseptica).